Reading from the N-terminus, the 498-residue chain is MLSNLLILPMLLPFLCALILVFLKNNDRISKYLYLGTMTITTIISLMLLIYVQRHRPITLDFGGWSAPFGIQFLGDSLSLIMVTTASFVITLIMAYGFGRGEHKANRYHLPSFILFLSVGVIGSFLTSDLFNLYVMFEIMLLASFVLITLGQSVEQLRAAIIYVVLNIIGSWLFLLGIGLLYKTVGTLNFSHIAMRLNDMGDNRTVTMISLIFLVAFSAKAALVLFMWLPKAYAVLNTELAALFAALMTKVGAYALIRFFTLLFDQHNDLIHPLLATMAAITMVIGAIGVIAYKDIKKIAAYQVIISIGFIILGLGTNTFAGINGAIFYLVNDIVVKTLLFFIIGSLVYITGYRQYQYLNGLAKKEPLFGVAFIIMIFAIGGVPPFSGFPGKVLIFQGALQNGNYIGLALMIITSLIAMYSLFRIFFYMYFGDKDGEEVNFKKIPLYRKRILSILVVVVIAIGIAAPVVLNVTSDATELNTSDQLYQKLVNPHLKGED.

A run of 14 helical transmembrane segments spans residues 2–22, 32–52, 78–98, 108–128, 130–150, 161–181, 209–229, 240–260, 271–291, 308–328, 330–350, 369–389, 406–426, and 451–471; these read LSNL…ILVF, YLYL…LIYV, LSLI…AYGF, YHLP…FLTS, LFNL…LITL, IIYV…IGLL, ISLI…FMWL, LAAL…IRFF, IHPL…IGVI, IGFI…GAIF, LVND…LVYI, FGVA…FSGF, IGLA…FRIF, and ILSI…VVLN.

The protein belongs to the CPA3 antiporters (TC 2.A.63) subunit D family. As to quaternary structure, may form a heterooligomeric complex that consists of seven subunits: mnhA2, mnhB2, mnhC2, mnhD2, mnhE2, mnhF2 and mnhG2.

It is found in the cell membrane. The sequence is that of Putative antiporter subunit mnhD2 (mnhD2) from Staphylococcus aureus (strain Mu3 / ATCC 700698).